The sequence spans 403 residues: Stearoyl-[acyl-carrier-protein] 9-desaturase 4, chloroplastic (403 aa).

The transit peptide at 1–44 directs the protein to the chloroplast; that stretch reads MALLLNSTMTVAMKQNPATAVSFMQTTCLGSSFSPPRHLQVSCV. Fe cation-binding residues include Glu-140, Glu-178, His-181, Glu-231, Glu-264, and His-267.

It belongs to the fatty acid desaturase type 2 family. Homodimer. It depends on Fe(2+) as a cofactor. Preferentially expressed in roots.

Its subcellular location is the plastid. The protein resides in the chloroplast. The catalysed reaction is octadecanoyl-[ACP] + 2 reduced [2Fe-2S]-[ferredoxin] + O2 + 2 H(+) = (9Z)-octadecenoyl-[ACP] + 2 oxidized [2Fe-2S]-[ferredoxin] + 2 H2O. It participates in lipid metabolism; fatty acid metabolism. Converts stearoyl-ACP to oleoyl-ACP by introduction of a cis double bond between carbons 9 and 10 of the acyl chain. This Arabidopsis thaliana (Mouse-ear cress) protein is Stearoyl-[acyl-carrier-protein] 9-desaturase 4, chloroplastic (S-ACP-DES4).